Here is a 517-residue protein sequence, read N- to C-terminus: Serine O-succinyltransferase (517 aa).

Residues 1-46 (MSPLNGVARSFPRPFQAVTRRPFRVVQPAIACPSNSRSFNHSRSLR) constitute a mitochondrion transit peptide. The segment covering 36–64 (SRSFNHSRSLRSTGSQSPAPSPRDSSNPA) has biased composition (polar residues). The tract at residues 36-66 (SRSFNHSRSLRSTGSQSPAPSPRDSSNPALS) is disordered. One can recognise an AB hydrolase-1 domain in the interval 134 to 386 (NVILLHTGLS…LTQQLATKKQ (253 aa)). Residues 141 to 144 (GLSA) are important for substrate specificity. Ser-238 serves as the catalytic Nucleophile. Residue Arg-307 coordinates substrate. Residues 413 to 436 (QPYQEQPSASTSAEQSASASETGS) form a disordered region. The segment covering 416 to 436 (QEQPSASTSAEQSASASETGS) has biased composition (low complexity). Residues Asp-461 and His-498 contribute to the active site. Asp-499 is a substrate binding site.

The protein belongs to the AB hydrolase superfamily. MetX family.

It is found in the mitochondrion. It catalyses the reaction succinyl-CoA + L-serine = O-succinyl-L-serine + CoA. It participates in amino-acid biosynthesis; L-cysteine biosynthesis; L-cysteine from L-serine: step 1/2. Functionally, transfers a succinyl group from succinyl-CoA to L-serine, forming succinyl-L-serine. Also has weak serine acetyl transferase activity and homoserine succinyl transferase activity. The protein is Serine O-succinyltransferase of Emericella nidulans (strain FGSC A4 / ATCC 38163 / CBS 112.46 / NRRL 194 / M139) (Aspergillus nidulans).